We begin with the raw amino-acid sequence, 394 residues long: MSKEKFERNKPHVNVGTIGHVDHGKTTLTAAITNVLAKHFGGKAFAFDQIDKAPEERERGITINTSHVEYDTAIRHYAHVDCPGHADYVKNMITGAAQMDGAILVVAATDGPMPQTREHILLGRQVGIPYMIVFMNKCDMVDDEELLELVEMEVRELLTEYDFPGDDLPVVRGSALKALEGDAAWEEKIIELANHLDTYIPEPERAIDLPFLMPIEDVFSIAGRGTVVTGRVERGIVKVGETVEIVGIKDTVSTTCTGVEMFRKLLDEGRAGENIGALLRGVKREDVERGQVLAKPGSIKPHTKFESEVYVLSKEEGGRHTPFFKGYRPQFYFRTTDVTGTIELPEGVEMVMPGDNIKMVVTLIAPIAMDDGLRFAIREGGRTVGAGVVASVIA.

Positions 10-204 constitute a tr-type G domain; it reads KPHVNVGTIG…HLDTYIPEPE (195 aa). The G1 stretch occupies residues 19 to 26; that stretch reads GHVDHGKT. 19–26 contributes to the GTP binding site; that stretch reads GHVDHGKT. Residue T26 participates in Mg(2+) binding. Positions 60-64 are G2; that stretch reads GITIN. Positions 81–84 are G3; the sequence is DCPG. Residues 81 to 85 and 136 to 139 contribute to the GTP site; these read DCPGH and NKCD. The tract at residues 136–139 is G4; that stretch reads NKCD. The segment at 174 to 176 is G5; the sequence is SAL.

The protein belongs to the TRAFAC class translation factor GTPase superfamily. Classic translation factor GTPase family. EF-Tu/EF-1A subfamily. Monomer.

It localises to the cytoplasm. The catalysed reaction is GTP + H2O = GDP + phosphate + H(+). In terms of biological role, GTP hydrolase that promotes the GTP-dependent binding of aminoacyl-tRNA to the A-site of ribosomes during protein biosynthesis. This chain is Elongation factor Tu, found in Aeromonas salmonicida (strain A449).